The sequence spans 440 residues: UDP-glucose 6-dehydrogenase YwqF (440 aa).

Residues 2-19 (NITV…GVSL), V11, D30, K35, T121, and E155 contribute to the NAD(+) site. Residues 151-155 (EFLRE), K204, N208, 249-253 (FLKAG), and G257 each bind substrate. C260 acts as the Nucleophile in catalysis. K263 contacts NAD(+). K320 provides a ligand contact to substrate. R327 provides a ligand contact to NAD(+).

This sequence belongs to the UDP-glucose/GDP-mannose dehydrogenase family. Post-translationally, phosphorylated on tyrosine residue(s). Phosphorylated by YwqD and dephosphorylated by YwqE in vitro.

It is found in the cytoplasm. The enzyme catalyses UDP-alpha-D-glucose + 2 NAD(+) + H2O = UDP-alpha-D-glucuronate + 2 NADH + 3 H(+). Its pathway is nucleotide-sugar biosynthesis; UDP-alpha-D-glucuronate biosynthesis; UDP-alpha-D-glucuronate from UDP-alpha-D-glucose: step 1/1. With respect to regulation, competitively inhibited by UDP-glucose. Activated by phosphorylation, which may increase affinity for NAD(+); inhibited by dephosphorylation. In terms of biological role, catalyzes the conversion of UDP-glucose into UDP-glucuronate, one of the precursors of teichuronic acid. The chain is UDP-glucose 6-dehydrogenase YwqF (ywqF) from Bacillus subtilis (strain 168).